Reading from the N-terminus, the 814-residue chain is Protein kinase C-binding protein NELL2 (814 aa).

An N-terminal signal peptide occupies residues 1-19 (MEFILGIFCVLFCLRAGAG). Residues N51, N223, and N296 are each glycosylated (N-linked (GlcNAc...) asparagine). The 174-residue stretch at 53–226 (SKAFLFQDTS…SQCPDLNRTC (174 aa)) folds into the Laminin G-like domain. Residues 270–329 (RSCTVKGNIYRELESWMDGCKKCTCTNGTAQCETLTCSAPNCLSGFSPAYVPGKCCKECQ) enclose the VWFC 1 domain. Positions 395 to 437 (GHDFCSEGHNCMGYSICKNLDDKAVCICRDGFRALREDNAYCE) constitute an EGF-like 1 domain. 3 disulfide bridges follow: C399-C411, C405-C420, and C422-C436. D438, I439, and E441 together coordinate Ca(2+). Residues 438–479 (DIDECTEGRHYCRENTVCVNTPGSFMCVCQTGYLKIDDYSCT) form the EGF-like 2; calcium-binding domain. Disulfide bonds link C442-C455, C449-C464, C466-C478, C484-C497, C491-C506, C508-C519, C523-C533, C527-C539, and C541-C550. Ca(2+) is bound by residues N457, T458, and S461. In terms of domain architecture, EGF-like 3; calcium-binding spans 480 to 520 (EHNECATNQHSCDENAMCFNTVGGHNCVCQPGYTGNGTDCR). The N-linked (GlcNAc...) asparagine glycan is linked to N515. An EGF-like 4 domain is found at 521-551 (AFCKDGCRNGGTCIAPNICACPQGFTGPSCE). D553, I554, and E556 together coordinate Ca(2+). In terms of domain architecture, EGF-like 5; calcium-binding spans 553–599 (DIDECTEGFVQCDSRANCINLPGWYHCECRDGYHDNGMFSLGGESCE). Disulfide bonds link C557-C570, C564-C579, and C581-C598. Residues N572, L573, and W576 each coordinate Ca(2+). Ca(2+) contacts are provided by D600, I601, and E603. The EGF-like 6; calcium-binding domain maps to 600–635 (DIDECATGRHSCSNDTVCFNLDGGFDCRCPHGKNCS). 3 cysteine pairs are disulfide-bonded: C604/C617, C611/C626, and C628/C634. An N-linked (GlcNAc...) asparagine glycan is attached at N613. Ca(2+)-binding residues include N619, L620, and G623. N-linked (GlcNAc...) asparagine glycosylation occurs at N633. VWFC domains are found at residues 636–691 (GDCT…PECD) and 696–754 (SQCL…PRCV).

In terms of assembly, homotrimer.

The protein localises to the secreted. May regulate neuronal differentiation, polarization and axon guidance. This Xenopus laevis (African clawed frog) protein is Protein kinase C-binding protein NELL2 (nell2.L).